The following is a 131-amino-acid chain: Large ribosomal subunit protein bL17 (131 aa).

This sequence belongs to the bacterial ribosomal protein bL17 family. Part of the 50S ribosomal subunit. Contacts protein L32.

The protein is Large ribosomal subunit protein bL17 of Shewanella amazonensis (strain ATCC BAA-1098 / SB2B).